The primary structure comprises 220 residues: Putative GED domain-containing protein DNM1P46 (220 aa).

Positions 18 to 46 are disordered; it reads VSVETRNVKPQGKDSKAEENGSHSFMHSM. Positions 28–38 are enriched in basic and acidic residues; sequence QGKDSKAEENG. The 96-residue stretch at 54–149 folds into the GED domain; it reads METTQNLVDS…CCPTCTRLGT (96 aa). A disordered region spans residues 173-194; the sequence is DTPGGVGRAGTAARRDSRGNEK. Basic and acidic residues predominate over residues 185–194; sequence ARRDSRGNEK.

This Homo sapiens (Human) protein is Putative GED domain-containing protein DNM1P46 (DNM1P46).